A 205-amino-acid polypeptide reads, in one-letter code: Putative 3-methyladenine DNA glycosylase (205 aa).

It belongs to the DNA glycosylase MPG family.

This Bacillus cereus (strain AH187) protein is Putative 3-methyladenine DNA glycosylase.